The following is a 298-amino-acid chain: Probable tRNA(His) guanylyltransferase (298 aa).

Mg(2+)-binding residues include D58, G59, and D105. GTP-binding positions include 58-63 (DGRNFH) and 104-105 (SD).

The protein belongs to the tRNA(His) guanylyltransferase family. Homotetramer. Interacts with MFN1 and MFN2; functions as a guanyl-nucleotide exchange factor/GEF for MFN2 and also probably MFN1. Mg(2+) serves as cofactor.

The protein localises to the cytoplasm. It is found in the mitochondrion. The catalysed reaction is a 5'-end ribonucleotide-tRNA(His) + GTP + ATP + H2O = a 5'-end phospho-guanosine-ribonucleotide-tRNA(His) + AMP + 2 diphosphate + H(+). Functionally, adds a GMP to the 5'-end of tRNA(His) after transcription and RNase P cleavage. This step is essential for proper recognition of the tRNA and for the fidelity of protein synthesis. Also functions as a guanyl-nucleotide exchange factor/GEF for the MFN1 and MFN2 mitofusins thereby regulating mitochondrial fusion. By regulating both mitochondrial dynamics and bioenergetic function, it contributes to cell survival following oxidative stress. The chain is Probable tRNA(His) guanylyltransferase (THG1L) from Bos taurus (Bovine).